Reading from the N-terminus, the 223-residue chain is DNA mismatch repair protein MutH (223 aa).

It belongs to the MutH family.

It localises to the cytoplasm. In terms of biological role, sequence-specific endonuclease that cleaves unmethylated GATC sequences. It is involved in DNA mismatch repair. This chain is DNA mismatch repair protein MutH, found in Haemophilus influenzae (strain PittEE).